A 1402-amino-acid polypeptide reads, in one-letter code: Erbin (1402 aa).

LRR repeat units follow at residues 23-44 (TVTT…IFTF), 47-68 (TLEE…LFNC), 70-91 (SLHK…IANL), 93-114 (NLRE…IKNC), 116-137 (VLTI…FSQL), 139-161 (NLTQ…GRLT), 162-183 (KLQI…MNRL), 185-206 (QLER…LEQL), 208-229 (GLRE…IGSL), 231-252 (QLTY…ISTC), 254-275 (NLQD…IGSL), 277-298 (NVTT…IGGL), 300-321 (SIEE…IGQL), 323-344 (NMRT…IGNW), 346-367 (NITV…MGDM), 369-391 (KLKV…TKLQ), and 392-413 (QLTA…QKET). Phosphoserine occurs at positions 440 and 444. Disordered stretches follow at residues 465–489 (DEDK…PYPD) and 507–543 (DEET…TTKS). Positions 470-480 (EREAPPREGNL) are enriched in basic and acidic residues. At tyrosine 483 the chain carries Phosphotyrosine. Threonine 485 is modified (phosphothreonine). The span at 507 to 534 (DEETNEESGRDLKQHEDQQVVNKDKCVK) shows a compositional bias: basic and acidic residues. Phosphoserine occurs at positions 595, 599, 600, and 617. Positions 629 to 638 (NKKDDAKDAD) are enriched in basic and acidic residues. A disordered region spans residues 629–694 (NKKDDAKDAD…PVDSNSKVRQ (66 aa)). Low complexity predominate over residues 647–659 (NSNQNNSNCSSPS). A compositionally biased stretch (polar residues) spans 660-689 (RMSDSVSLNTDSSQDTSLCSPVKQTPVDSN). 4 positions are modified to phosphoserine: serine 712, serine 849, serine 854, and serine 869. The interval 824–864 (EDTAPSPGRVEPQKASSSADVGISKSTEDLSPQRSGPTGAV) is disordered. Position 914 is a phosphothreonine (threonine 914). Phosphotyrosine is present on tyrosine 917. Serine 928 is modified (phosphoserine). Tyrosine 970 is subject to Phosphotyrosine. Disordered stretches follow at residues 990–1018 (WHPK…ENHS) and 1070–1093 (TTIQ…TRRT). The span at 1070-1084 (TTIQRQSSVSSTASV) shows a compositional bias: polar residues. Phosphotyrosine is present on tyrosine 1097. 3 disordered regions span residues 1107–1187 (GRTP…VPHD), 1198–1217 (AKKL…CQDD), and 1222–1274 (EEQN…VARH). Composition is skewed to polar residues over residues 1128-1139 (GPNTSRPQSARP) and 1149-1164 (MSVS…PSKR). Phosphoserine is present on residues serine 1150 and serine 1171. Residues leucine 1231, arginine 1234, and serine 1276 each carry the phosphoserine modification. The PDZ domain occupies 1311–1400 (EIRVRVEKDP…AVDLIIVREV (90 aa)).

This sequence belongs to the LAP (LRR and PDZ) protein family. Interacts with ERBB2, BPAG1 and ITGB4. May favor the localization of ERBB2, by restricting its presence to the basolateral membrane of epithelial cells. Also found to interact with ARVCF and delta catenin. Interacts (via C-terminus) with DST (via N-terminus). Interacts with NOD2 (via CARD domain). Post-translationally, isoform 2 is phosphorylated on Ser-1231 and Ser-1234.

The protein resides in the cell junction. Its subcellular location is the hemidesmosome. The protein localises to the nucleus membrane. It is found in the basolateral cell membrane. In terms of biological role, acts as an adapter for the receptor ERBB2, in epithelia. By binding the unphosphorylated ERBB2 'Tyr-1248' receptor, it may contribute to stabilize this unphosphorylated state. Inhibits NOD2-dependent NF-kappa-B signaling and pro-inflammatory cytokine secretion. In Mus musculus (Mouse), this protein is Erbin.